The primary structure comprises 320 residues: Atrochrysone carboxyl ACP thioesterase (320 aa).

Zn(2+) is bound by residues histidine 103, histidine 105, aspartate 107, and histidine 108. Aspartate 107 acts as the Proton donor/acceptor in catalysis.

It belongs to the metallo-beta-lactamase superfamily. Zn(2+) is required as a cofactor.

The catalysed reaction is atrochrysone carboxyl-[ACP] + H2O = atrochrysone carboxylate + holo-[ACP] + H(+). It functions in the pathway secondary metabolite biosynthesis. In terms of biological role, atrochrysone carboxyl ACP thioesterase; part of the gene cluster that mediates the biosynthesis of geodin, an intermediate in the biosynthesis of other natural products. The pathway begins with the synthesis of atrochrysone thioester by the polyketide synthase (PKS) gedC. The atrochrysone carboxyl ACP thioesterase gedB then breaks the thioester bond and releases the atrochrysone carboxylic acid from gedC. The atrochrysone carboxylic acid is then converted to atrochrysone which is further transformed into emodinanthrone. The next step is performed by the emodinanthrone oxygenase gedH that catalyzes the oxidation of emodinanthrone to emodin. Emodin O-methyltransferase encoded probably by gedA then catalyzes methylation of the 8-hydroxy group of emodin to form questin. Ring cleavage of questin by questin oxidase gedK leads to desmethylsulochrin via several intermediates including questin epoxide. Another methylation step probably catalyzed by methyltransferase gedG leads to the formation of sulochrin which is further converted to dihydrogeodin by the sulochrin halogenase gedL. Finally, the dihydrogeodin oxidase gedJ catalyzes the stereospecific phenol oxidative coupling reaction converting dihydrogeodin to geodin. The chain is Atrochrysone carboxyl ACP thioesterase from Aspergillus terreus (strain NIH 2624 / FGSC A1156).